The sequence spans 329 residues: DNA-directed RNA polymerase subunit alpha (329 aa).

Residues M1–T231 are alpha N-terminal domain (alpha-NTD). Positions E247–D329 are alpha C-terminal domain (alpha-CTD).

This sequence belongs to the RNA polymerase alpha chain family. Homodimer. The RNAP catalytic core consists of 2 alpha, 1 beta, 1 beta' and 1 omega subunit. When a sigma factor is associated with the core the holoenzyme is formed, which can initiate transcription.

It catalyses the reaction RNA(n) + a ribonucleoside 5'-triphosphate = RNA(n+1) + diphosphate. Its function is as follows. DNA-dependent RNA polymerase catalyzes the transcription of DNA into RNA using the four ribonucleoside triphosphates as substrates. This Cytophaga hutchinsonii (strain ATCC 33406 / DSM 1761 / CIP 103989 / NBRC 15051 / NCIMB 9469 / D465) protein is DNA-directed RNA polymerase subunit alpha.